Here is a 91-residue protein sequence, read N- to C-terminus: Small ribosomal subunit protein uS19 (91 aa).

The protein belongs to the universal ribosomal protein uS19 family.

In terms of biological role, protein S19 forms a complex with S13 that binds strongly to the 16S ribosomal RNA. The polypeptide is Small ribosomal subunit protein uS19 (Afipia carboxidovorans (strain ATCC 49405 / DSM 1227 / KCTC 32145 / OM5) (Oligotropha carboxidovorans)).